The sequence spans 580 residues: Mucin-1 (580 aa).

The N-terminal stretch at 1–22 is a signal peptide; it reads MTPDIQAPFLSLLLLFPVLTVA. Topologically, residues 23–489 are extracellular; it reads NVPTLTTSDS…GSGVPGWGIA (467 aa). Polar residues predominate over residues 28-37; sequence TTSDSINPRR. A disordered region spans residues 28–359; it reads TTSDSINPRR…SIALSTSSNP (332 aa). The segment covering 38–88 has biased composition (low complexity); the sequence is TTPVSTTQSSPTSSPTKETSWSTTTTLLTASSPAPSPAASPGHDGASTPTS. 11 consecutive repeat copies span residues 70-89, 90-109, 110-129, 130-149, 150-169, 170-189, 190-209, 210-229, 230-249, 250-269, and 270-289. The tract at residues 70–289 is 11 X 20 AA approximate tandem repeats of P-A-P-S-P-A-A-S-P-G-H-D-G-A-S-T-P-T-S-S; sequence PAPSPAASPG…QHGASSPTSS (220 aa). O-linked (GalNAc...) serine glycosylation is found at Ser-73, Ser-77, and Ser-84. Thr-85 and Thr-87 each carry an O-linked (GalNAc...) threonine glycan. Ser-88 and Ser-89 each carry an O-linked (GalNAc...) serine glycan. Composition is skewed to low complexity over residues 96–108, 116–128, 136–148, 156–168, 176–188, 196–208, 216–228, 236–248, and 256–306; these read ASPG…TPTS, ASPG…SPTG, and ASPG…MVTS. An N-linked (GlcNAc...) asparagine glycan is attached at Asn-161. Asn-201 carries an N-linked (GlcNAc...) asparagine glycan. Asn-241 is a glycosylation site (N-linked (GlcNAc...) asparagine). The span at 308 to 344 shows a compositional bias: polar residues; it reads HKGTSSRATMTPVSKGTPSSVPSSETAPTAASHITRT. The span at 345–357 shows a compositional bias: low complexity; sequence AASSPSIALSTSS. The SEA domain occupies 368 to 475; sequence RVSLYFLSFR…VSVYSAPFPS (108 aa). 2 N-linked (GlcNAc...) asparagine glycosylation sites follow: Asn-384 and Asn-460. The helical transmembrane segment at 490–510 threads the bilayer; it reads LLVLVCVLVALAIIYLIALVV. 2 S-palmitoyl cysteine lipidation sites follow: Cys-511 and Cys-513. Residues 511–580 are Cytoplasmic-facing; that stretch reads CQCGRKKCEQ…TNLAATSANL (70 aa). Positions 519–555 are interaction with P53; it reads EQLDVFPTLDAYHPMSEYSTYHTHGRYVPPGSTKRSP. Tyr-530 bears the Phosphotyrosine; by PDGFR mark. The Interaction with GRB2 signature appears at 530 to 533; the sequence is YHPM. Position 539 is a phosphotyrosine (Tyr-539). Residues 544–563 are disordered; sequence RYVPPGSTKRSPYEEVSAGN. Tyr-545 carries the post-translational modification Phosphotyrosine; by PDGFR. Residues 550 to 557 form a required for interaction with GSK3B region; that stretch reads STKRSPYE. At Thr-551 the chain carries Phosphothreonine; by PKC/PRKCD. Ser-554 is subject to Phosphoserine; by GSK3-beta. At Tyr-556 the chain carries Phosphotyrosine; by CSK, EGFR and SRC. The Interaction with SRC and ESR1 motif lies at 556–559; that stretch reads YEEV. The segment at 560-568 is required for interaction with beta- and gamma-catenins; that stretch reads SAGNGGSNL. A Phosphotyrosine modification is found at Tyr-570. The Required for interaction with AP1S2 motif lies at 570 to 572; that stretch reads YTN.

In terms of assembly, the alpha subunit forms a tight, non-covalent heterodimeric complex with the proteolytically-released beta subunit. Binds directly the SH2 domain of GRB2, and forms a MUC1/GRB2/SOS1 complex involved in RAS signaling. The cytoplasmic tail (MUC1CT) interacts with several proteins such as, SRC, CTNNB1 and ERBs. Interaction with the SH2 domain of CSK decreases interaction with GSK3B. Interacts with CTNNB1/beta-catenin and JUP/gamma-catenin and promotes cell adhesion. Interaction with JUP/gamma-catenin is induced by heregulin. Binds PRKCD, ERBB2, ERBB3 and ERBB4. Heregulin (HRG) stimulates the interaction with ERBB2 and, to a much lesser extent, the interaction with ERBB3 and ERBB4. Interacts with P53 in response to DNA damage. Interacts with KLF4. Interacts with estrogen receptor alpha/ESR1, through its DNA-binding domain, and stimulates its transcription activity. Binds ADAM17. In terms of processing, highly glycosylated (N- and O-linked carbohydrates and sialic acid). O-linked glycosylation consists mainly of GalNAc, galactose, and sialic acid. The ratio from pools of milk from different dairy breeds is GalNAc: GlcNAc:galactose:mannose:sialic acid is 14:1:10:1:15. Post-translationally, proteolytic cleavage in the SEA domain occurs in the endoplasmic reticulum by an autoproteolytic mechanism and requires the full-length SEA domain as well as requiring a Ser, Thr or Cys residue at the P + 1 site. Ectodomain shedding is mediated by ADAM17 in uterine epithelial cells. Dual palmitoylation on cysteine residues in the CQC motif is required for recycling from endosomes back to the plasma membrane. In terms of processing, phosphorylated on tyrosines and serine residues in the C-terminal. Phosphorylation on tyrosines in the C-terminal increases the nuclear location of MUC1 and beta-catenin. Phosphorylation by PKC delta induces binding of MUC1 to beta-catenin/CTNNB1 and thus decreases the formation of the beta-catenin/E-cadherin complex. Src-mediated phosphorylation inhibits interaction with GSK3B. Csk- or Src- or EGFR-mediated phosphorylation on Tyr-556 increases binding to beta-catenin/CTNNB1. GSK3B-mediated phosphorylation on Ser-554 decreases this interaction but restores the formation of the beta-cadherin/E-cadherin complex. On T-cell receptor activation, phosphorylated by LCK. PDGFR-mediated phosphorylation increases nuclear colocalization of MUC1CT and CTNNB1. In terms of tissue distribution, expressed on the apical surface of epithelia cells, and on the milk fat globule membrane (MGGM).

The protein localises to the apical cell membrane. It localises to the cell membrane. Its subcellular location is the cytoplasm. It is found in the nucleus. The alpha subunit has cell adhesive properties. May provide a protective layer on epithelial cells against bacterial and enzyme attack. In terms of biological role, the beta subunit contains a C-terminal domain which is involved in cell signaling, through phosphorylations and protein-protein interactions. Modulates signaling in ERK, Src and NF-kappa-B pathways. In activated T-cells, influences directly or indirectly the Ras/MAPK pathway. Promotes tumor progression. Regulates P53-mediated transcription and determines cell fate in the genotoxic stress response. Binds, together with KLF4, the PE21 promoter element of P53 and represses P53 activity. This is Mucin-1 (MUC1) from Bos taurus (Bovine).